The sequence spans 536 residues: Phosphoenolpyruvate carboxykinase (ATP) (536 aa).

3 residues coordinate substrate: Arg-61, Tyr-195, and Lys-201. Residues Lys-201, His-220, and 236–244 (GLSGTGKTT) each bind ATP. Mn(2+) contacts are provided by Lys-201 and His-220. Asp-257 is a Mn(2+) binding site. The ATP site is built by Glu-285, Arg-323, and Thr-448. Position 323 (Arg-323) interacts with substrate.

Belongs to the phosphoenolpyruvate carboxykinase (ATP) family. Mn(2+) serves as cofactor.

The protein localises to the cytoplasm. The catalysed reaction is oxaloacetate + ATP = phosphoenolpyruvate + ADP + CO2. The protein operates within carbohydrate biosynthesis; gluconeogenesis. Its function is as follows. Involved in the gluconeogenesis. Catalyzes the conversion of oxaloacetate (OAA) to phosphoenolpyruvate (PEP) through direct phosphoryl transfer between the nucleoside triphosphate and OAA. In Methylobacterium nodulans (strain LMG 21967 / CNCM I-2342 / ORS 2060), this protein is Phosphoenolpyruvate carboxykinase (ATP).